A 204-amino-acid chain; its full sequence is Octanoyltransferase (204 aa).

The BPL/LPL catalytic domain occupies 27–202; the sequence is QGGEEALLLL…RFQPFLHLHL (176 aa). Residues 65–72, 132–134, and 145–147 each bind substrate; these read RGGDVTYH, SIG, and GFA. C163 (acyl-thioester intermediate) is an active-site residue.

This sequence belongs to the LipB family.

The protein resides in the cytoplasm. The enzyme catalyses octanoyl-[ACP] + L-lysyl-[protein] = N(6)-octanoyl-L-lysyl-[protein] + holo-[ACP] + H(+). It functions in the pathway protein modification; protein lipoylation via endogenous pathway; protein N(6)-(lipoyl)lysine from octanoyl-[acyl-carrier-protein]: step 1/2. In terms of biological role, catalyzes the transfer of endogenously produced octanoic acid from octanoyl-acyl-carrier-protein onto the lipoyl domains of lipoate-dependent enzymes. Lipoyl-ACP can also act as a substrate although octanoyl-ACP is likely to be the physiological substrate. In Geobacter sp. (strain M21), this protein is Octanoyltransferase.